The following is a 186-amino-acid chain: Elongation factor P (186 aa).

It belongs to the elongation factor P family.

The protein localises to the cytoplasm. It participates in protein biosynthesis; polypeptide chain elongation. Involved in peptide bond synthesis. Stimulates efficient translation and peptide-bond synthesis on native or reconstituted 70S ribosomes in vitro. Probably functions indirectly by altering the affinity of the ribosome for aminoacyl-tRNA, thus increasing their reactivity as acceptors for peptidyl transferase. This is Elongation factor P from Synechococcus sp. (strain RCC307).